Here is a 497-residue protein sequence, read N- to C-terminus: Glutamate--tRNA ligase (497 aa).

Positions 13–23 match the 'HIGH' region motif; it reads PSPTGDPHVGT. The 'KMSKS' region signature appears at 253 to 257; it reads KISKR. Residue lysine 256 coordinates ATP.

It belongs to the class-I aminoacyl-tRNA synthetase family. Glutamate--tRNA ligase type 1 subfamily. In terms of assembly, monomer.

It is found in the cytoplasm. It catalyses the reaction tRNA(Glu) + L-glutamate + ATP = L-glutamyl-tRNA(Glu) + AMP + diphosphate. Functionally, catalyzes the attachment of glutamate to tRNA(Glu) in a two-step reaction: glutamate is first activated by ATP to form Glu-AMP and then transferred to the acceptor end of tRNA(Glu). This chain is Glutamate--tRNA ligase, found in Cutibacterium acnes (strain DSM 16379 / KPA171202) (Propionibacterium acnes).